Reading from the N-terminus, the 203-residue chain is Recombination protein RecR (203 aa).

The segment at 56–71 adopts a C4-type zinc-finger fold; it reads CAVCGNVSDDERCRIC. Residues 79–179 enclose the Toprim domain; sequence ALVCVVEEPK…TVTRIASGLP (101 aa).

Belongs to the RecR family.

In terms of biological role, may play a role in DNA repair. It seems to be involved in an RecBC-independent recombinational process of DNA repair. It may act with RecF and RecO. This is Recombination protein RecR from Mycobacterium ulcerans (strain Agy99).